The sequence spans 348 residues: tRNA N6-adenosine threonylcarbamoyltransferase (348 aa).

Residues His109 and His113 each coordinate Fe cation. Residues 136-140 (TVSGG), Asp169, Gly182, Asp186, and Asn284 each bind substrate. Position 312 (Asp312) interacts with Fe cation.

The protein belongs to the KAE1 / TsaD family. Requires Fe(2+) as cofactor.

Its subcellular location is the cytoplasm. It carries out the reaction L-threonylcarbamoyladenylate + adenosine(37) in tRNA = N(6)-L-threonylcarbamoyladenosine(37) in tRNA + AMP + H(+). Functionally, required for the formation of a threonylcarbamoyl group on adenosine at position 37 (t(6)A37) in tRNAs that read codons beginning with adenine. Is involved in the transfer of the threonylcarbamoyl moiety of threonylcarbamoyl-AMP (TC-AMP) to the N6 group of A37, together with TsaE and TsaB. TsaD likely plays a direct catalytic role in this reaction. The sequence is that of tRNA N6-adenosine threonylcarbamoyltransferase from Chlorobium luteolum (strain DSM 273 / BCRC 81028 / 2530) (Pelodictyon luteolum).